We begin with the raw amino-acid sequence, 326 residues long: DNA-directed RNA polymerase subunit alpha (326 aa).

Residues 1 to 230 (MLKIEKQAKA…LHLDPFLEIG (230 aa)) are alpha N-terminal domain (alpha-NTD). The interval 249-326 (DIQVIDDKSH…YDLEKNGSPE (78 aa)) is alpha C-terminal domain (alpha-CTD).

It belongs to the RNA polymerase alpha chain family. Homodimer. The RNAP catalytic core consists of 2 alpha, 1 beta, 1 beta' and 1 omega subunit. When a sigma factor is associated with the core the holoenzyme is formed, which can initiate transcription.

The catalysed reaction is RNA(n) + a ribonucleoside 5'-triphosphate = RNA(n+1) + diphosphate. In terms of biological role, DNA-dependent RNA polymerase catalyzes the transcription of DNA into RNA using the four ribonucleoside triphosphates as substrates. In Fusobacterium nucleatum subsp. nucleatum (strain ATCC 25586 / DSM 15643 / BCRC 10681 / CIP 101130 / JCM 8532 / KCTC 2640 / LMG 13131 / VPI 4355), this protein is DNA-directed RNA polymerase subunit alpha.